The chain runs to 206 residues: tRNA(Phe) 7-((3-amino-3-carboxypropyl)-4-demethylwyosine(37)-N(4))-methyltransferase 2 (206 aa).

Belongs to the TYW3 family.

It carries out the reaction 4-demethyl-7-[(3S)-3-amino-3-carboxypropyl]wyosine(37) in tRNA(Phe) + S-adenosyl-L-methionine = 7-[(3S)-3-amino-3-carboxypropyl]wyosine(37) in tRNA(Phe) + S-adenosyl-L-homocysteine + H(+). Its function is as follows. S-adenosyl-L-methionine-dependent methyltransferase that acts as a component of the wyosine derivatives biosynthesis pathway. Probably methylates N-4 position of wybutosine-86 to produce wybutosine-72. The chain is tRNA(Phe) 7-((3-amino-3-carboxypropyl)-4-demethylwyosine(37)-N(4))-methyltransferase 2 from Pyrococcus abyssi (strain GE5 / Orsay).